The following is a 124-amino-acid chain: Nucleoid-associated protein Noca_0318 (124 aa).

The protein belongs to the YbaB/EbfC family. Homodimer.

The protein resides in the cytoplasm. It localises to the nucleoid. Functionally, binds to DNA and alters its conformation. May be involved in regulation of gene expression, nucleoid organization and DNA protection. This chain is Nucleoid-associated protein Noca_0318, found in Nocardioides sp. (strain ATCC BAA-499 / JS614).